Here is a 2344-residue protein sequence, read N- to C-terminus: Peroxide stress-activated histidine kinase mak3 (2344 aa).

In terms of domain architecture, Protein kinase spans 1–295; the sequence is MYSQHELRNK…GIVNDLEACL (295 aa). Phosphoserine is present on residues S12, S16, and S17. The span at 486 to 503 shows a compositional bias: polar residues; that stretch reads SGNTRKTSLLGSNHSSYS. The disordered stretch occupies residues 486–506; the sequence is SGNTRKTSLLGSNHSSYSDKL. 2 TPR repeats span residues 829-862 and 1340-1373; these read CHYLHLAAEEALKIGANQEALDLYNRCIKMIPHE and AFAFETVGSIFVSMELYTSATQYLEEAIRNYAAL. The region spanning 1730–1781 is the PAC domain; the sequence is FELEIRIKRKDGVYRWNLTRCTPTTNEKNRTSFLCATIDIDDQKKARATALE. The region spanning 1792-2018 is the Histidine kinase domain; that stretch reads NISHELRTPF…TFKICYDLKI (227 aa). H1795 bears the Phosphohistidine; by autocatalysis mark. A Response regulatory domain is found at 2211-2333; it reads KILIAEDNPI…TLIKMLLQYL (123 aa). D2263 is modified (4-aspartylphosphate).

Its subcellular location is the cytoplasm. It catalyses the reaction ATP + protein L-histidine = ADP + protein N-phospho-L-histidine.. Its function is as follows. Involved in the control of the SAPK-dependent transcriptional response to peroxide stress. Regulates sty1 activity. The sequence is that of Peroxide stress-activated histidine kinase mak3 (mak3) from Schizosaccharomyces pombe (strain 972 / ATCC 24843) (Fission yeast).